Consider the following 217-residue polypeptide: Non-structural protein NS3 (217 aa).

The protein belongs to the orbivirus NS3 family.

Functionally, may play a role in the release of virions from infected cells. The sequence is that of Non-structural protein NS3 (Segment-10) from African horse sickness virus (AHSV).